The primary structure comprises 580 residues: Cytochrome c oxidase subunit 1 (580 aa).

The segment at 1-25 is disordered; it reads MTAVAPRVDGHVAPQRPEPTGHARK. The helical transmembrane segment at 43-63 threads the bilayer; sequence IMYIIMSFSFFFLGGLMALLI. A Fe(II)-heme a-binding site is contributed by His87. 6 helical membrane-spanning segments follow: residues 90-110, 122-142, 171-191, 214-234, 259-279, and 292-312; these read VMLLLYGTPIVWGFANYVLPL, LNAFGFWITTVGGVAMLAGFL, MWIIGVGATGIGSVASAINML, IFVTSVLALLIFPLLLAAALG, LFWFFGHPEVYVLALPFFGII, and FGYIGLVFATLSIGALSMAVW. Positions 265 and 269 each coordinate Cu cation. Residues 265–269 constitute a cross-link (1'-histidyl-3'-tyrosine (His-Tyr)); the sequence is HPEVY. 2 residues coordinate Cu cation: His314 and His315. 2 helical membrane passes run 316–336 and 360–380; these read MFVTGAVLLPFFSFMTFLISV and MIWAVGFMSTFLFGGLTGIML. His398 contributes to the heme a3 binding site. 3 helical membrane passes run 399-419, 434-454, and 477-497; these read FHYTLFGTVVFASCAGVYFWF, IHFWLTFVGFHGTFMVQHWLG, and ISTIFSFLLGLSVIPFVWNVF. His400 contacts Fe(II)-heme a.

Belongs to the heme-copper respiratory oxidase family. As to quaternary structure, associates with subunits II, III and IV to form cytochrome c oxidase. The cofactor is Cu(2+). Heme is required as a cofactor.

The protein localises to the cell membrane. It catalyses the reaction 4 Fe(II)-[cytochrome c] + O2 + 8 H(+)(in) = 4 Fe(III)-[cytochrome c] + 2 H2O + 4 H(+)(out). The protein operates within energy metabolism; oxidative phosphorylation. Its function is as follows. Cytochrome c oxidase is the component of the respiratory chain that catalyzes the reduction of oxygen to water. Subunits 1-3 form the functional core of the enzyme complex. CO I is the catalytic subunit of the enzyme. Electrons originating in cytochrome c are transferred via the copper A center of subunit 2 and heme A of subunit 1 to the bimetallic center formed by heme A3 and copper B. In Corynebacterium efficiens (strain DSM 44549 / YS-314 / AJ 12310 / JCM 11189 / NBRC 100395), this protein is Cytochrome c oxidase subunit 1 (ctaD).